A 512-amino-acid chain; its full sequence is Maturase K (512 aa).

It belongs to the intron maturase 2 family. MatK subfamily.

It localises to the plastid. The protein resides in the chloroplast. Functionally, usually encoded in the trnK tRNA gene intron. Probably assists in splicing its own and other chloroplast group II introns. The sequence is that of Maturase K from Lilium tsingtauense (Twilight lily).